Reading from the N-terminus, the 133-residue chain is NADH dehydrogenase [ubiquinone] 1 alpha subcomplex subunit 6 (133 aa).

Belongs to the complex I LYR family. In terms of assembly, complex I is composed of at least 49 different subunits.

It localises to the mitochondrion inner membrane. Functionally, accessory subunit of the mitochondrial membrane respiratory chain NADH dehydrogenase (Complex I), that is believed to be not involved in catalysis. Complex I functions in the transfer of electrons from NADH to the respiratory chain. The immediate electron acceptor for the enzyme is believed to be ubiquinone. In Arabidopsis thaliana (Mouse-ear cress), this protein is NADH dehydrogenase [ubiquinone] 1 alpha subcomplex subunit 6.